The primary structure comprises 418 residues: Serine--tRNA ligase (418 aa).

227–229 lines the L-serine pocket; that stretch reads TSE. ATP contacts are provided by residues 258-260 and Val274; that span reads RRE. Glu281 lines the L-serine pocket. Residue 345–348 participates in ATP binding; the sequence is ELTS. Thr380 lines the L-serine pocket.

It belongs to the class-II aminoacyl-tRNA synthetase family. Type-1 seryl-tRNA synthetase subfamily. Homodimer. The tRNA molecule binds across the dimer.

Its subcellular location is the cytoplasm. The catalysed reaction is tRNA(Ser) + L-serine + ATP = L-seryl-tRNA(Ser) + AMP + diphosphate + H(+). It carries out the reaction tRNA(Sec) + L-serine + ATP = L-seryl-tRNA(Sec) + AMP + diphosphate + H(+). Its pathway is aminoacyl-tRNA biosynthesis; selenocysteinyl-tRNA(Sec) biosynthesis; L-seryl-tRNA(Sec) from L-serine and tRNA(Sec): step 1/1. Catalyzes the attachment of serine to tRNA(Ser). Is also able to aminoacylate tRNA(Sec) with serine, to form the misacylated tRNA L-seryl-tRNA(Sec), which will be further converted into selenocysteinyl-tRNA(Sec). The polypeptide is Serine--tRNA ligase (Rhodococcus opacus (strain B4)).